The following is a 136-amino-acid chain: Fluoride-specific ion channel FluC (136 aa).

The next 4 helical transmembrane spans lie at 3 to 23 (TLPPLYATLNVALGGAIGAVL), 46 to 66 (ATLAINALGSLLMGVLAGVLF), 78 to 98 (LLIGTGILGGFTTFSAFSLEV), and 109 to 129 (FAALYVVLSVSLAISALVFGL). Glycine 86 and threonine 89 together coordinate Na(+).

The protein belongs to the fluoride channel Fluc/FEX (TC 1.A.43) family.

The protein localises to the cell inner membrane. The catalysed reaction is fluoride(in) = fluoride(out). With respect to regulation, na(+) is not transported, but it plays an essential structural role and its presence is essential for fluoride channel function. Functionally, fluoride-specific ion channel. Important for reducing fluoride concentration in the cell, thus reducing its toxicity. This chain is Fluoride-specific ion channel FluC, found in Erythrobacter litoralis (strain HTCC2594).